A 747-amino-acid polypeptide reads, in one-letter code: NAD(P)H-quinone oxidoreductase subunit 5, chloroplastic (747 aa).

Transmembrane regions (helical) follow at residues 8–28 (AWIIPFVPLLVTMLIGLELLL), 39–59 (IWAFPAVLLLSIVMVFSTKLA), 89–109 (IDPLTSIMSILITTVGIMVLI), 125–145 (FAYMSFFNTAMLGLVTSPNLI), 147–167 (IHIFWELVGMCSYLLIGFWFT), 185–205 (GDFGLLLGILGFYLITGSFEF), 231–251 (AFLLFLGAVAKSAQFPLHVWL), 259–279 (TPISALIHAATMVAAGIFLVA), 281–301 (LLPLFIAIPYIMNIISLIGVI), 328–348 (LGYMMLALGIGSYRAALFHLI), 355–375 (ALLFLGSGSIIHSMEPIVGYS), 397–417 (TTFFLGTLSLCGIPPLACFWS), 426–446 (WLYSPIFAIIAFYTAGLTAFY), 550–570 (LFPLLILAIFTLFVGCIGIHF), 608–628 (FYSVSIAYFGIFLASVLYGSV), and 726–746 (LFLYLACVSIVLLIYYYYNFL).

This sequence belongs to the complex I subunit 5 family. As to quaternary structure, NDH is composed of at least 16 different subunits, 5 of which are encoded in the nucleus.

It is found in the plastid. The protein resides in the chloroplast thylakoid membrane. It carries out the reaction a plastoquinone + NADH + (n+1) H(+)(in) = a plastoquinol + NAD(+) + n H(+)(out). The catalysed reaction is a plastoquinone + NADPH + (n+1) H(+)(in) = a plastoquinol + NADP(+) + n H(+)(out). Functionally, NDH shuttles electrons from NAD(P)H:plastoquinone, via FMN and iron-sulfur (Fe-S) centers, to quinones in the photosynthetic chain and possibly in a chloroplast respiratory chain. The immediate electron acceptor for the enzyme in this species is believed to be plastoquinone. Couples the redox reaction to proton translocation, and thus conserves the redox energy in a proton gradient. This is NAD(P)H-quinone oxidoreductase subunit 5, chloroplastic (ndhF) from Nymphaea alba (White water-lily).